The sequence spans 58 residues: ATP synthase F(0) complex subunit k, mitochondrial (58 aa).

Residues Lys16 and Lys17 each carry the N6-acetyllysine modification. Residues 23-45 (TLTGRMNCVLATYGGIALLVLYF) form a helical membrane-spanning segment.

As to quaternary structure, component of the ATP synthase complex composed at least of ATP5F1A/subunit alpha, ATP5F1B/subunit beta, ATP5MC1/subunit c (homooctomer), MT-ATP6/subunit a, MT-ATP8/subunit 8, ATP5ME/subunit e, ATP5MF/subunit f, ATP5MG/subunit g, ATP5MK/subunit k, ATP5MJ/subunit j, ATP5F1C/subunit gamma, ATP5F1D/subunit delta, ATP5F1E/subunit epsilon, ATP5PF/subunit F6, ATP5PB/subunit b, ATP5PD/subunit d, ATP5PO/subunit OSCP. ATP synthase complex consists of a soluble F(1) head domain (subunits alpha(3) and beta(3)) - the catalytic core - and a membrane F(0) domain - the membrane proton channel (subunits c, a, 8, e, f, g, k and j). These two domains are linked by a central stalk (subunits gamma, delta, and epsilon) rotating inside the F1 region and a stationary peripheral stalk (subunits F6, b, d, and OSCP). The ATP synthase complex/complex V exists as a monomeric and a dimeric supercomplex that helps shape mitochondrial cristae to optimize proton flow. Ubiquitous. Highly expressed in skeletal and cardiac muscle. Moderately expressed in brain, thymus, stomach and testis. Lowest expression levels were detected in lung, liver, kidney, adrenal gland, spleen, small intestine and adipose tissue. In streptozotocin-induced diabetes, the insulin-sensitive tissues skeletal and cardiac muscle were down-regulated.

It is found in the mitochondrion membrane. Functionally, subunit k, of the mitochondrial membrane ATP synthase complex (F(1)F(0) ATP synthase or Complex V) that produces ATP from ADP in the presence of a proton gradient across the membrane which is generated by electron transport complexes of the respiratory chain. ATP synthase complex consist of a soluble F(1) head domain - the catalytic core - and a membrane F(1) domain - the membrane proton channel. These two domains are linked by a central stalk rotating inside the F(1) region and a stationary peripheral stalk. During catalysis, ATP synthesis in the catalytic domain of F(1) is coupled via a rotary mechanism of the central stalk subunits to proton translocation. In vivo, can only synthesize ATP although its ATP hydrolase activity can be activated artificially in vitro. Part of the complex F(0) domain. Required for dimerization of the ATP synthase complex and as such regulates ATP synthesis in the mitochondria. The protein is ATP synthase F(0) complex subunit k, mitochondrial (Atp5mk) of Rattus norvegicus (Rat).